Reading from the N-terminus, the 683-residue chain is Acyl-CoA synthetase short-chain family member 3, mitochondrial (683 aa).

A mitochondrion-targeting transit peptide spans 1–29 (MKPSWLQCRKVTGAGTLGAPLPGSPSVRG). 223-226 (EPGR) provides a ligand contact to CoA. Residues 421 to 423 (GER) and 442 to 447 (DHWWQT) contribute to the ATP site. Residue Lys514 is modified to N6-succinyllysine. Lys520 carries the post-translational modification N6-acetyllysine. ATP contacts are provided by Asp535, Arg550, and Arg561. Residue Arg620 coordinates CoA.

This sequence belongs to the ATP-dependent AMP-binding enzyme family. In terms of tissue distribution, expressed in a wide range of tissues, with the highest levels observed in the liver followed by kidney.

It is found in the mitochondrion matrix. The enzyme catalyses acetate + ATP + CoA = acetyl-CoA + AMP + diphosphate. It catalyses the reaction propanoate + ATP + CoA = propanoyl-CoA + AMP + diphosphate. The catalysed reaction is butanoate + ATP + CoA = butanoyl-CoA + AMP + diphosphate. Catalyzes the synthesis of acetyl-CoA from short-chain fatty acids. Propionate is the preferred substrate but can also utilize acetate and butyrate with a much lower affinity. This is Acyl-CoA synthetase short-chain family member 3, mitochondrial (Acss3) from Rattus norvegicus (Rat).